The chain runs to 188 residues: Elongation factor P (188 aa).

The protein belongs to the elongation factor P family.

Its subcellular location is the cytoplasm. Its pathway is protein biosynthesis; polypeptide chain elongation. Functionally, involved in peptide bond synthesis. Stimulates efficient translation and peptide-bond synthesis on native or reconstituted 70S ribosomes in vitro. Probably functions indirectly by altering the affinity of the ribosome for aminoacyl-tRNA, thus increasing their reactivity as acceptors for peptidyl transferase. The chain is Elongation factor P from Mycoplasma mobile (strain ATCC 43663 / 163K / NCTC 11711) (Mesomycoplasma mobile).